A 327-amino-acid polypeptide reads, in one-letter code: tRNA-dihydrouridine(20/20a) synthase (327 aa).

Residues 11–13 (PML) and Q63 contribute to the FMN site. C93 (proton donor) is an active-site residue. Residues K132, H165, 205-207 (NGG), and 227-228 (GR) contribute to the FMN site.

Belongs to the Dus family. DusA subfamily. The cofactor is FMN.

It catalyses the reaction 5,6-dihydrouridine(20) in tRNA + NADP(+) = uridine(20) in tRNA + NADPH + H(+). It carries out the reaction 5,6-dihydrouridine(20) in tRNA + NAD(+) = uridine(20) in tRNA + NADH + H(+). The enzyme catalyses 5,6-dihydrouridine(20a) in tRNA + NADP(+) = uridine(20a) in tRNA + NADPH + H(+). The catalysed reaction is 5,6-dihydrouridine(20a) in tRNA + NAD(+) = uridine(20a) in tRNA + NADH + H(+). Functionally, catalyzes the synthesis of 5,6-dihydrouridine (D), a modified base found in the D-loop of most tRNAs, via the reduction of the C5-C6 double bond in target uridines. Specifically modifies U20 and U20a in tRNAs. The protein is tRNA-dihydrouridine(20/20a) synthase of Vibrio cholerae serotype O1 (strain ATCC 39315 / El Tor Inaba N16961).